A 233-amino-acid polypeptide reads, in one-letter code: DNA repair protein RecO (233 aa).

It belongs to the RecO family.

In terms of biological role, involved in DNA repair and RecF pathway recombination. The polypeptide is DNA repair protein RecO (Pseudomonas aeruginosa (strain LESB58)).